Reading from the N-terminus, the 188-residue chain is Probable DNA-directed RNA polymerase subunit delta (188 aa).

An HTH HARE-type domain is found at 14-83 (LSMIEVARAI…GENKWGLRSW (70 aa)). Residues 119–188 (EDAIDYSADD…EDEEDEDEEE (70 aa)) are disordered.

Belongs to the RpoE family. RNAP is composed of a core of 2 alpha, a beta and a beta' subunits. The core is associated with a delta subunit and one of several sigma factors.

Participates in both the initiation and recycling phases of transcription. In the presence of the delta subunit, RNAP displays an increased specificity of transcription, a decreased affinity for nucleic acids, and an increased efficiency of RNA synthesis because of enhanced recycling. This is Probable DNA-directed RNA polymerase subunit delta from Streptococcus equi subsp. zooepidemicus (strain H70).